Consider the following 537-residue polypeptide: CWF19-like protein 1 (537 aa).

A disordered region spans residues 297–323; it reads KQGRKRPSTGRDTRPPHAKQPRKPPQP.

The protein belongs to the CWF19 family.

The chain is CWF19-like protein 1 (Cwf19l1) from Mus musculus (Mouse).